The chain runs to 1493 residues: Mitogen-activated protein kinase kinase kinase 1 (1493 aa).

Residues 1-23 (MAAAAGDRASSSGFPGAAAASPE) are compositionally biased toward low complexity. Disordered stretches follow at residues 1 to 178 (MAAA…PEER) and 194 to 300 (HEWL…EETS). Alanine 2 carries the post-translational modification N-acetylalanine. Serine 21 carries the phosphoserine modification. Residues 24-35 (AGGGGGGGGALQ) are compositionally biased toward gly residues. The span at 36-46 (GSGAPAAGAAG) shows a compositional bias: low complexity. The segment covering 89–99 (PPCPSTSPSPE) has biased composition (pro residues). Low complexity predominate over residues 140-156 (ARSPAGAEPPSAAAPSG). Serine 142 carries the post-translational modification Phosphoserine. Residues 157–178 (REMENKETLKGLHKMEDRPEER) show a composition bias toward basic and acidic residues. Residues 235–256 (SAAPAPKGRRSPSPGSSPSGRS) show a composition bias toward low complexity. Serine 270 carries the phosphoserine modification. Residue threonine 280 is modified to Phosphothreonine. A phosphoserine mark is found at serine 287, serine 292, and serine 295. Residues 333–361 (YRVFIGPQNCSCGRGAFCIHLLFVMLRVF) form an SWIM-type zinc finger. Positions 411 to 428 (SNSHTLSSSSTSTSSSEN) are enriched in low complexity. The interval 411 to 431 (SNSHTLSSSSTSTSSSENSIK) is disordered. An RING-type zinc finger spans residues 438 to 487 (CPICLLGMLDEESLTVCEDGCRNKLHHHCMSIWAEECRRNREPLICPLCR). Phosphoserine occurs at positions 502 and 526. Disordered regions lie at residues 506-531 (SPAS…RRNQ) and 895-914 (EHTV…RLSA). Positions 512 to 527 (AVQQPSSPQQPVAGSQ) are enriched in low complexity. A Phosphoserine modification is found at serine 915. 2 disordered regions span residues 927–957 (SVGL…LNSS) and 992–1066 (PCKI…TLDL). Positions 998-1013 (ASPQTQRKFSLQFQRN) are enriched in polar residues. A phosphoserine mark is found at serine 999 and serine 1024. The span at 1049–1063 (GSTSKLGDATKSSMT) shows a compositional bias: polar residues. In terms of domain architecture, Protein kinase spans 1224–1489 (WLKGQQIGLG…SRELLKHPVF (266 aa)). Residues 1230–1238 (IGLGAFSSC) and lysine 1253 each bind ATP. Aspartate 1350 functions as the Proton acceptor in the catalytic mechanism. Threonine 1381 and threonine 1393 each carry phosphothreonine; by autocatalysis.

Belongs to the protein kinase superfamily. STE Ser/Thr protein kinase family. MAP kinase kinase kinase subfamily. Binds both upstream activators and downstream substrates in multimolecular complexes through its N-terminus. Oligomerizes after binding MAP4K2 or TRAF2. Interacts with AXIN1. Interacts (via the kinase catalytic domain) with STK38. Interacts with GRIPAP1. The cofactor is Mg(2+). Post-translationally, autophosphorylated. Highly expressed in the heart and spleen while a lower level expression is seen in the liver.

The enzyme catalyses L-seryl-[protein] + ATP = O-phospho-L-seryl-[protein] + ADP + H(+). The catalysed reaction is L-threonyl-[protein] + ATP = O-phospho-L-threonyl-[protein] + ADP + H(+). Its activity is regulated as follows. Activated by autophosphorylation on Thr-1381 and Thr-1393 following oligomerization. Its function is as follows. Component of a protein kinase signal transduction cascade. Activates the ERK and JNK kinase pathways by phosphorylation of MAP2K1 and MAP2K4. May phosphorylate the MAPK8/JNK1 kinase. Activates CHUK and IKBKB, the central protein kinases of the NF-kappa-B pathway. The sequence is that of Mitogen-activated protein kinase kinase kinase 1 (Map3k1) from Mus musculus (Mouse).